A 520-amino-acid polypeptide reads, in one-letter code: Mitogen-activated protein kinase kinase 3 (520 aa).

A Phosphoserine modification is found at Ser69. The Protein kinase domain maps to 83–339; that stretch reads MRVFGAIGSG…ADQLLSHPFI (257 aa). Residues 89–97 and Lys112 contribute to the ATP site; that span reads IGSGASSVV. The active-site Proton acceptor is the Asp207. At Ser235 the chain carries Phosphoserine. Thr241 and Thr245 each carry phosphothreonine. Residues 366 to 516 form the NTF2 domain; it reads LADMLTIHYY…YFLAKQELYI (151 aa).

The protein belongs to the protein kinase superfamily. STE Ser/Thr protein kinase family. MAP kinase kinase subfamily. As to quaternary structure, interacts with MPK1, MPK2 and MPK7. Interacts with P.syringae type III effector HopF2. Interacts with MPK14. Binds to MAPKKK17 and MAPKKK18. Binds to MAPKKK20. In terms of processing, phosphorylation at Ser-235 and Thr-241 by MAP kinase kinase kinases positively regulates kinase activity. Phosphorylated by MAPKKK20. In terms of tissue distribution, mostly expressed in leaves, and, to a lower extent, in roots, seedlings, flower buds, flowers and siliques.

The protein localises to the nucleus. It localises to the cytoplasm. It carries out the reaction L-seryl-[protein] + ATP = O-phospho-L-seryl-[protein] + ADP + H(+). The catalysed reaction is L-threonyl-[protein] + ATP = O-phospho-L-threonyl-[protein] + ADP + H(+). It catalyses the reaction L-tyrosyl-[protein] + ATP = O-phospho-L-tyrosyl-[protein] + ADP + H(+). MKK3-MPK6 module plays an important role in the jasmonate signal transduction pathway through the negative regulation of MYC2/JIN1 expression. Activates by phosphorylation the downstream MPK6, MPK7 and MPK8. MKK3-MPK7 module acts as a positive regulator of PR1 gene expression. MKK3-MPK8 module negatively regulates ROS accumulation through controlling expression of the RBOHD gene. Component of the abscisic acid (ABA) signaling pathway that may act as ABA signal transducer in the context of abiotic stresses. Activator of the C group MAP kinases. Activates MPK7 in response to ABA. Mitogen-activated protein kinase (MAPK) that is specifically regulated by MAPKKK20 and mediates signaling that regulates cortical microtubule functions. The polypeptide is Mitogen-activated protein kinase kinase 3 (Arabidopsis thaliana (Mouse-ear cress)).